The sequence spans 308 residues: uncharacterized protein (308 aa).

A coiled-coil region spans residues 212-242; the sequence is EADKMTIDYMRELDNLQRQYDGLVDEDKALH.

This is an uncharacterized protein from Ostreid herpesvirus 1 (isolate France) (OsHV-1).